The sequence spans 155 residues: Small ribosomal subunit protein uS7 (155 aa).

This sequence belongs to the universal ribosomal protein uS7 family. Part of the 30S ribosomal subunit. Contacts proteins S9 and S11.

Its function is as follows. One of the primary rRNA binding proteins, it binds directly to 16S rRNA where it nucleates assembly of the head domain of the 30S subunit. Is located at the subunit interface close to the decoding center, probably blocks exit of the E-site tRNA. In Thermotoga maritima (strain ATCC 43589 / DSM 3109 / JCM 10099 / NBRC 100826 / MSB8), this protein is Small ribosomal subunit protein uS7.